The primary structure comprises 199 residues: 5'-deoxynucleotidase CKO_00504 (199 aa).

Residues 18–19 (RW) and His33 contribute to the substrate site. The 113-residue stretch at 30–142 (VSEHSLQVAM…VKQADALCAY (113 aa)) folds into the HD domain. The a divalent metal cation site is built by His33, His68, and Asp69. Substrate-binding positions include Asp69, 77–80 (DLPT), and Asp137. Asp137 is an a divalent metal cation binding site.

The protein belongs to the 5DNU family. As to quaternary structure, homodimer. The cofactor is a divalent metal cation.

It is found in the cytoplasm. The enzyme catalyses a 2'-deoxyribonucleoside 5'-phosphate + H2O = a 2'-deoxyribonucleoside + phosphate. Its function is as follows. Catalyzes the strictly specific dephosphorylation of 2'-deoxyribonucleoside 5'-monophosphates. In Citrobacter koseri (strain ATCC BAA-895 / CDC 4225-83 / SGSC4696), this protein is 5'-deoxynucleotidase CKO_00504.